Consider the following 190-residue polypeptide: Guanylate kinase (190 aa).

The Guanylate kinase-like domain occupies 3 to 185 (NYIFIISAPS…SLEQLCKYFE (183 aa)). 10–17 (APSGAGKS) lines the ATP pocket.

This sequence belongs to the guanylate kinase family.

The protein resides in the cytoplasm. The enzyme catalyses GMP + ATP = GDP + ADP. Essential for recycling GMP and indirectly, cGMP. The protein is Guanylate kinase of Francisella tularensis subsp. holarctica (strain LVS).